The sequence spans 745 residues: MPSVDEITNGVDELDFVDDADIDFSDIEQKYSVKFDEGLDDVIVIEGVPVITESRQQKLFETIQKRFKTHANIDIAVEGMHIPYADNGESKGYIFVEMASAEDAAQAIRQMDGYAFDKKHRFSVHRFTDVEKFASLSETYEEPQEEEFKPREHLRSWLADPAGRDQLVICRGDDVEIAWHNRSSDPQVEHSRPRWTESYVQWSPLGTFLTTFHRQGIQIWGGPSCERFMRFPHPGARLVDFSPSEKYMVTWSHEPIQVPDNAPIGPQFFGPEDEGNRIAVWEVRTGHLLRSFPVPQDESGQPGQLKGFSWPFLKWSPDDKYCARLNPGQAISVYETPSMGLLEKKSIKIEGVVDFEWCPMGDKDRELAEAAKPNKKARDNMIVYWQPEVANQPARVTVMAVPSRTILRSKNLFNVSDCKLHWHPQGDYLCVKVDRHTKTKKSMFCNLEIFRVREKEFPVEVVELKDAVTAFAWEPFGTHFALISSNDPQLGTPASGITIKTQLNFYHLHPKGDFRPLKVFDNKTANTLFWSPRGRHIVVATLGSSQKFDLEWYDVDFMHEVRQGNPSADPADDVKLIGTGEHYGITDLEWDPSGRYVATSASVWRHSLENGFAIWDFKGQELQKHIQDRFKQILWRPRPRTLLGKDEQKRVRKNLREYSKQFEEEDAAEESNLASAERELYQRILEEWKAWRARSRRDLEQLRADLGREEVGQSVDHAKKLAEEATEEVQEWMEEIIEETEEVLA.

Positions 41-129 constitute an RRM domain; sequence DVIVIEGVPV…HRFSVHRFTD (89 aa). WD repeat units lie at residues 189 to 230, 251 to 293, 303 to 344, and 580 to 625; these read EHSR…RFMR, WSHE…RSFP, GQLK…LLEK, and GEHY…LQKH. Residues 644-745 adopt a coiled-coil conformation; sequence GKDEQKRVRK…IIEETEEVLA (102 aa).

The protein belongs to the eIF-3 subunit B family. Component of the eukaryotic translation initiation factor 3 (eIF-3) complex.

The protein resides in the cytoplasm. RNA-binding component of the eukaryotic translation initiation factor 3 (eIF-3) complex, which is involved in protein synthesis of a specialized repertoire of mRNAs and, together with other initiation factors, stimulates binding of mRNA and methionyl-tRNAi to the 40S ribosome. The eIF-3 complex specifically targets and initiates translation of a subset of mRNAs involved in cell proliferation. This Mycosarcoma maydis (Corn smut fungus) protein is Eukaryotic translation initiation factor 3 subunit B.